The sequence spans 214 residues: Adenylate kinase (214 aa).

An ATP-binding site is contributed by 10–15 (GAGKGT). The tract at residues 30 to 59 (STGDILRAAVKDMTPMGGKAKSFMDAGALV) is NMP. AMP is bound by residues T31, R36, 57-59 (ALV), 85-88 (GFPR), and Q92. The segment at 126 to 163 (GRRTCRNCGKGFHVSFDPPKSSGICDECSGELYQRDDD) is LID. Residue R127 participates in ATP binding. Zn(2+) is bound by residues C130, C133, C150, and C153. Positions 160 and 171 each coordinate AMP. G199 contributes to the ATP binding site.

It belongs to the adenylate kinase family. Monomer.

The protein localises to the cytoplasm. The catalysed reaction is AMP + ATP = 2 ADP. It functions in the pathway purine metabolism; AMP biosynthesis via salvage pathway; AMP from ADP: step 1/1. Functionally, catalyzes the reversible transfer of the terminal phosphate group between ATP and AMP. Plays an important role in cellular energy homeostasis and in adenine nucleotide metabolism. The chain is Adenylate kinase from Geotalea daltonii (strain DSM 22248 / JCM 15807 / FRC-32) (Geobacter daltonii).